The sequence spans 365 residues: Phospho-N-acetylmuramoyl-pentapeptide-transferase (365 aa).

10 consecutive transmembrane segments (helical) span residues 15–35, 51–71, 96–116, 121–141, 156–176, 180–200, 217–237, 238–258, 279–299, and 344–364; these read PSGT…AVLI, VPVL…VPLL, TMGG…FAGF, IAVA…DWQV, LILQ…TAPE, ITFF…LAGF, GLAG…ALPA, HPGL…FIYH, LAAA…SGIF, and TQIV…SFIL.

The protein belongs to the glycosyltransferase 4 family. MraY subfamily. Requires Mg(2+) as cofactor.

It is found in the cell inner membrane. The catalysed reaction is UDP-N-acetyl-alpha-D-muramoyl-L-alanyl-gamma-D-glutamyl-meso-2,6-diaminopimeloyl-D-alanyl-D-alanine + di-trans,octa-cis-undecaprenyl phosphate = di-trans,octa-cis-undecaprenyl diphospho-N-acetyl-alpha-D-muramoyl-L-alanyl-D-glutamyl-meso-2,6-diaminopimeloyl-D-alanyl-D-alanine + UMP. It functions in the pathway cell wall biogenesis; peptidoglycan biosynthesis. Catalyzes the initial step of the lipid cycle reactions in the biosynthesis of the cell wall peptidoglycan: transfers peptidoglycan precursor phospho-MurNAc-pentapeptide from UDP-MurNAc-pentapeptide onto the lipid carrier undecaprenyl phosphate, yielding undecaprenyl-pyrophosphoryl-MurNAc-pentapeptide, known as lipid I. This is Phospho-N-acetylmuramoyl-pentapeptide-transferase from Picosynechococcus sp. (strain ATCC 27264 / PCC 7002 / PR-6) (Agmenellum quadruplicatum).